A 232-amino-acid chain; its full sequence is ATP-dependent Clp protease proteolytic subunit 2 (232 aa).

Residue S124 is the Nucleophile of the active site. H149 is an active-site residue.

The protein belongs to the peptidase S14 family. Fourteen ClpP subunits assemble into 2 heptameric rings which stack back to back to give a disk-like structure with a central cavity, resembling the structure of eukaryotic proteasomes.

It localises to the cytoplasm. It catalyses the reaction Hydrolysis of proteins to small peptides in the presence of ATP and magnesium. alpha-casein is the usual test substrate. In the absence of ATP, only oligopeptides shorter than five residues are hydrolyzed (such as succinyl-Leu-Tyr-|-NHMec, and Leu-Tyr-Leu-|-Tyr-Trp, in which cleavage of the -Tyr-|-Leu- and -Tyr-|-Trp bonds also occurs).. Cleaves peptides in various proteins in a process that requires ATP hydrolysis. Has a chymotrypsin-like activity. Plays a major role in the degradation of misfolded proteins. The polypeptide is ATP-dependent Clp protease proteolytic subunit 2 (Nostoc sp. (strain PCC 7120 / SAG 25.82 / UTEX 2576)).